A 329-amino-acid polypeptide reads, in one-letter code: Protein-arginine N-acetylglucosaminyltransferase NleB1 (329 aa).

The N-beta-linked (GlcNAc) arginine; by autocatalysis glycan is linked to R13. Residue 48-50 coordinates UDP-N-acetyl-alpha-D-glucosamine; sequence QWF. R53 carries N-beta-linked (GlcNAc) arginine; by autocatalysis glycosylation. Y72 is a UDP-N-acetyl-alpha-D-glucosamine binding site. R159 is a glycosylation site (N-beta-linked (GlcNAc) arginine; by autocatalysis). 219–222 lines the UDP-N-acetyl-alpha-D-glucosamine pocket; that stretch reads YLDA. A DXD motif motif is present at residues 221–223; it reads DAD. Residue D223 coordinates Mn(2+). Catalysis depends on E253, which acts as the Proton acceptor. R293 is a glycosylation site (N-beta-linked (GlcNAc) arginine; by autocatalysis). 2 residues coordinate Mn(2+): N320 and S322. Residues S322 and 327–329 contribute to the UDP-N-acetyl-alpha-D-glucosamine site; that span reads SSW.

The protein belongs to the glycosyltransferase NleB family. The cofactor is Mn(2+). In terms of processing, auto-glycosylated: arginine GlcNAcylation is required for activity toward death domain-containing host target proteins.

The protein resides in the secreted. Its subcellular location is the host cytoplasm. The enzyme catalyses L-arginyl-[protein] + UDP-N-acetyl-alpha-D-glucosamine = N(omega)-(N-acetyl-beta-D-glucosaminyl)-L-arginyl-[protein] + UDP + H(+). Protein-arginine N-acetylglucosaminyltransferase activity is inhibited by 100066N compound (flavone analog) and 102644N compound (a substituted isoxazole). Its function is as follows. Protein-arginine N-acetylglucosaminyltransferase effector that disrupts TNF signaling in infected cells, including NF-kappa-B signaling, apoptosis and necroptosis. Acts by catalyzing the transfer of a single N-acetylglucosamine (GlcNAc) to a conserved arginine residue in the death domain of host proteins such as FADD: arginine GlcNAcylation prevents homotypic/heterotypic death domain interactions and assembly of the oligomeric TNF-alpha receptor complex, thereby disrupting TNF signaling. Also acts on host proteins without a death domain: catalyzes arginine GlcNAcylation of host GAPDH protein, thereby preventing GAPDH interaction with TRAF2, leading to inhibit NF-kappa-B signaling. Catalyzes auto-GlcNAcylation, which is required for activity toward death domain-containing host target proteins. The chain is Protein-arginine N-acetylglucosaminyltransferase NleB1 from Escherichia coli O157:H7.